The primary structure comprises 340 residues: Dual specificity protein phosphatase 12 (340 aa).

Met1 is modified (N-acetylmethionine). The 146-residue stretch at Gln26–Glu171 folds into the Tyrosine-protein phosphatase domain. Cys115 acts as the Phosphocysteine intermediate in catalysis. A substrate-binding site is contributed by His116–Arg121. Ser335 is modified (phosphoserine).

This sequence belongs to the protein-tyrosine phosphatase family. Non-receptor class dual specificity subfamily. In terms of assembly, monomer. Zn(2+) is required as a cofactor. Ubiquitous, highest expression in spleen, testis, ovary, and peripheral blood leukocytes and lower expression in liver and lung.

It localises to the nucleus. The protein resides in the cytoplasm. It is found in the cytosol. It carries out the reaction O-phospho-L-tyrosyl-[protein] + H2O = L-tyrosyl-[protein] + phosphate. The catalysed reaction is O-phospho-L-seryl-[protein] + H2O = L-seryl-[protein] + phosphate. The enzyme catalyses O-phospho-L-threonyl-[protein] + H2O = L-threonyl-[protein] + phosphate. Functionally, dual specificity phosphatase; can dephosphorylate both phosphotyrosine and phosphoserine or phosphothreonine residues. Can dephosphorylate glucokinase (in vitro). Has phosphatase activity with the synthetic substrate 6,8-difluoro-4-methylumbelliferyl phosphate and other in vitro substrates. This Homo sapiens (Human) protein is Dual specificity protein phosphatase 12 (DUSP12).